The chain runs to 500 residues: ATP synthase subunit alpha (500 aa).

169–176 (GDRQTGKT) is a binding site for ATP.

Belongs to the ATPase alpha/beta chains family. F-type ATPases have 2 components, CF(1) - the catalytic core - and CF(0) - the membrane proton channel. CF(1) has five subunits: alpha(3), beta(3), gamma(1), delta(1), epsilon(1). CF(0) has three main subunits: a(1), b(2) and c(9-12). The alpha and beta chains form an alternating ring which encloses part of the gamma chain. CF(1) is attached to CF(0) by a central stalk formed by the gamma and epsilon chains, while a peripheral stalk is formed by the delta and b chains.

It is found in the cell membrane. It carries out the reaction ATP + H2O + 4 H(+)(in) = ADP + phosphate + 5 H(+)(out). Its function is as follows. Produces ATP from ADP in the presence of a proton gradient across the membrane. The alpha chain is a regulatory subunit. The chain is ATP synthase subunit alpha from Clostridioides difficile (strain 630) (Peptoclostridium difficile).